A 998-amino-acid polypeptide reads, in one-letter code: Sensor histidine kinase AruS (998 aa).

Disordered regions lie at residues 27-82 (ERRP…HARA), 154-198 (RQAG…LPAG), and 224-245 (RQHP…RQPR). The span at 40-49 (GEAAVRRAGL) shows a compositional bias: low complexity. The segment covering 161 to 183 (HRLHRPRTTHRHAVRRAPGRRRE) has biased composition (basic residues). Helical transmembrane passes span 264 to 284 (VLLF…FFEY) and 395 to 415 (ASLL…SWLF). Positions 417–473 (SLVTRHLWRMSEFAGHIAEGDLQQPLRLDKVDRERDEIDAVAAALEDMRQALRTDRR) constitute an HAMP domain. One can recognise a Histidine kinase domain in the interval 513–734 (TMSHEIRTPL…TFWFEIELAL (222 aa)). The residue at position 516 (H516) is a Phosphohistidine; by autocatalysis. One can recognise a Response regulatory domain in the interval 751-869 (EVLLVEDVAL…ELRRALGEVG (119 aa)). D800 is modified (4-aspartylphosphate). An HPt domain is found at 894-987 (GRHKLAGLLG…RDGAEALRRA (94 aa)). The residue at position 933 (H933) is a Phosphohistidine.

In terms of processing, autophosphorylated. Activation may require a sequential transfer of a phosphate group from a His in the primary transmitter domain, to an Asp in the receiver domain and to a His in the secondary transmitter domain.

It is found in the cell membrane. The catalysed reaction is ATP + protein L-histidine = ADP + protein N-phospho-L-histidine.. It functions in the pathway amino-acid degradation; L-arginine degradation [regulation]. Functionally, member of the two-component regulatory system AruS/AruR, which is involved in the regulation of the arginine transaminase (ATA) pathway in response to exogeneous L-arginine. Probably functions as a sensor kinase that phosphorylates AruR. The sequence is that of Sensor histidine kinase AruS (aruS) from Pseudomonas aeruginosa (strain ATCC 15692 / DSM 22644 / CIP 104116 / JCM 14847 / LMG 12228 / 1C / PRS 101 / PAO1).